Here is a 250-residue protein sequence, read N- to C-terminus: uncharacterized protein (250 aa).

A helical transmembrane segment spans residues 4–24 (FKYLLFLVVFAVFFLTFAFFD).

It is found in the membrane. This is an uncharacterized protein from Methanocaldococcus jannaschii (strain ATCC 43067 / DSM 2661 / JAL-1 / JCM 10045 / NBRC 100440) (Methanococcus jannaschii).